A 150-amino-acid chain; its full sequence is Ribonuclease pancreatic (150 aa).

A signal peptide spans 1-26 (MALKSLVLLSLLVLVLLLVRVQPSLG). Residues Lys27 and Lys33 are each glycosylated (N-linked (Glc) (glycation) lysine; in vitro). Positions 33 and 36 each coordinate substrate. His38 serves as the catalytic Proton acceptor. Cystine bridges form between Cys52-Cys110, Cys66-Cys121, Cys84-Cys136, and Cys91-Cys98. Residue Asn60 is glycosylated (N-linked (GlcNAc...) asparagine; partial). Lys63 and Lys67 each carry an N-linked (Glc) (glycation) lysine; in vitro glycan. Residues 67-71 (KPVNT), Lys92, and Arg111 contribute to the substrate site. His145 acts as the Proton donor in catalysis.

This sequence belongs to the pancreatic ribonuclease family. In terms of assembly, interacts with and forms tight 1:1 complexes with RNH1. Dimerization of two such complexes may occur. Interaction with RNH1 inhibits this protein. Monomer. Pancreas.

The protein resides in the secreted. It carries out the reaction an [RNA] containing cytidine + H2O = an [RNA]-3'-cytidine-3'-phosphate + a 5'-hydroxy-ribonucleotide-3'-[RNA].. It catalyses the reaction an [RNA] containing uridine + H2O = an [RNA]-3'-uridine-3'-phosphate + a 5'-hydroxy-ribonucleotide-3'-[RNA].. Endonuclease that catalyzes the cleavage of RNA on the 3' side of pyrimidine nucleotides. Acts on single-stranded and double-stranded RNA. The protein is Ribonuclease pancreatic (RNASE1) of Bos taurus (Bovine).